The chain runs to 294 residues: Cytidine deaminase (294 aa).

CMP/dCMP-type deaminase domains are found at residues 48–168 and 187–294; these read NDDE…FGPK and DNTS…RVTL. Substrate is bound at residue 89–91; it reads NME. Residue H102 coordinates Zn(2+). Catalysis depends on E104, which acts as the Proton donor. C129 and C132 together coordinate Zn(2+).

Belongs to the cytidine and deoxycytidylate deaminase family. Homodimer. Requires Zn(2+) as cofactor.

It catalyses the reaction cytidine + H2O + H(+) = uridine + NH4(+). The enzyme catalyses 2'-deoxycytidine + H2O + H(+) = 2'-deoxyuridine + NH4(+). This enzyme scavenges exogenous and endogenous cytidine and 2'-deoxycytidine for UMP synthesis. The sequence is that of Cytidine deaminase from Proteus mirabilis (strain HI4320).